Reading from the N-terminus, the 323-residue chain is Beta-ketoacyl-[acyl-carrier-protein] synthase III (323 aa).

Active-site residues include cysteine 114 and histidine 250. Positions 251-255 are ACP-binding; it reads QANIR. Asparagine 280 is a catalytic residue.

This sequence belongs to the thiolase-like superfamily. FabH family. Homodimer.

The protein localises to the cytoplasm. It carries out the reaction malonyl-[ACP] + acetyl-CoA + H(+) = 3-oxobutanoyl-[ACP] + CO2 + CoA. The protein operates within lipid metabolism; fatty acid biosynthesis. Catalyzes the condensation reaction of fatty acid synthesis by the addition to an acyl acceptor of two carbons from malonyl-ACP. Catalyzes the first condensation reaction which initiates fatty acid synthesis and may therefore play a role in governing the total rate of fatty acid production. Possesses both acetoacetyl-ACP synthase and acetyl transacylase activities. Its substrate specificity determines the biosynthesis of branched-chain and/or straight-chain of fatty acids. This chain is Beta-ketoacyl-[acyl-carrier-protein] synthase III, found in Ruegeria pomeroyi (strain ATCC 700808 / DSM 15171 / DSS-3) (Silicibacter pomeroyi).